We begin with the raw amino-acid sequence, 469 residues long: Glutamate--tRNA ligase (469 aa).

The 'HIGH' region motif lies at 11 to 21 (PSPTGFIHLGN). Positions 118-131 (GEKPRYDGTWRPEP) are enriched in basic and acidic residues. The tract at residues 118 to 139 (GEKPRYDGTWRPEPGKVLPEPP) is disordered. The short motif at 243 to 247 (KMSKR) is the 'KMSKS' region element. Lys246 contributes to the ATP binding site.

The protein belongs to the class-I aminoacyl-tRNA synthetase family. Glutamate--tRNA ligase type 1 subfamily. In terms of assembly, monomer.

Its subcellular location is the cytoplasm. It catalyses the reaction tRNA(Glu) + L-glutamate + ATP = L-glutamyl-tRNA(Glu) + AMP + diphosphate. Catalyzes the attachment of glutamate to tRNA(Glu) in a two-step reaction: glutamate is first activated by ATP to form Glu-AMP and then transferred to the acceptor end of tRNA(Glu). This is Glutamate--tRNA ligase from Burkholderia pseudomallei (strain 668).